A 336-amino-acid chain; its full sequence is uncharacterized protein (336 aa).

Over residues 297–316 (KKDLQKSEEEEHPNDDHVYM) the composition is skewed to basic and acidic residues. Positions 297 to 336 (KKDLQKSEEEEHPNDDHVYMTEEDDMEKIERGIESLGNGH) are disordered.

This is an uncharacterized protein from Invertebrate iridescent virus 6 (IIV-6).